The following is a 131-amino-acid chain: Sec-independent protein translocase protein TatB (131 aa).

Residues 2-22 (FDGIGFMELLLIGILGLVVLG) traverse the membrane as a helical segment. 2 stretches are compositionally biased toward polar residues: residues 68-83 (ESQG…QDSI) and 116-131 (AEKS…KPNG). A disordered region spans residues 68-131 (ESQGLKNLSP…TGANSDKPNG (64 aa)).

This sequence belongs to the TatB family. The Tat system comprises two distinct complexes: a TatABC complex, containing multiple copies of TatA, TatB and TatC subunits, and a separate TatA complex, containing only TatA subunits. Substrates initially bind to the TatABC complex, which probably triggers association of the separate TatA complex to form the active translocon.

Its subcellular location is the cell inner membrane. Its function is as follows. Part of the twin-arginine translocation (Tat) system that transports large folded proteins containing a characteristic twin-arginine motif in their signal peptide across membranes. Together with TatC, TatB is part of a receptor directly interacting with Tat signal peptides. TatB may form an oligomeric binding site that transiently accommodates folded Tat precursor proteins before their translocation. In Shewanella pealeana (strain ATCC 700345 / ANG-SQ1), this protein is Sec-independent protein translocase protein TatB.